We begin with the raw amino-acid sequence, 957 residues long: MLQTLQKLLGDPNDRKIRQYRPVVKLINSLEIEIASLSDAELKAKTTEFRQRLDRGESLDDLLPEAFAVVREAAKRVLNLRHYDVQLIGGMVLHEGQIAEMKTGEGKTLVATLPAYLNGLTGKGVHIVTVNGYLARRDSEWMGQVHRFLGLTVGLVQEGMSPEEKRRSYNCDITYCTNSELGFDYLRDNMATDIKEVMQRPFNYCIIDEVDSILIDEARTPLIISGQVARPSEKYLRAAQVARELIRDEHYEVDEKARNVILTDEGFEAAERLLGVSDLFDPKDPWAHFVFNAVKAKELFIKDVHYIVRNQEVVIVDEFTGRVLPGRRWSDGLHQAVEAKEGVPIQSESQTLATITYQNLFLLYPKLSGMTGTARTEEAEFGKTYNLEVTVIPTNRPIRRKDAPDLVYKTERGKWQAVAEEIAHMHAQGRPVLVGTTSVEKSERLSAMLKEMGIPHNLLNAKPENVEREAEIIAQAGRKGAVTIATNMAGRGTDIILGGNAEYMARLKLRERLMPKLAQLDADNPLGSVQMVGRGGGQGFGGTAPKPKKSWTVVSPNFYPCELSARTNQALDEVVAAAVTKYGLNRLPELVVEDLIAVASEKAPVQDPLILQLREVYNSIKAEYEKITEAEHEEVVRLGGLHVIGTERHESRRIDNQLRGRAGRQGDPGSSRFFLSLEDNLLKIFGGERVAKLMDMFRVEEDMPIEHPLLSSSLENAQRKVEVYYFDMRKQVFEYDEVMNNQRRAIYSERRRILEGENLKTKILDYVRKTVGEIVRAHVNPELPPEEWEIDKLTAKMQEFVPLLKQNLKVEDLQDLSYEQILDYLIKQAELAYEAKEAFLDTFEPGLMRKAERFFLLQQVDTLWREHLQQMEALREAVGLRGYGQKDPLIEYKNEGYELFLEMMDNIRRNTVYNLFIFTPQIVQVPQASRPAPAPTAAASPDPSSASGVVEADFTEE.

ATP-binding positions include Gln-86, 104-108, and Asp-494; that span reads GEGKT. Positions 929–947 are enriched in low complexity; the sequence is SRPAPAPTAAASPDPSSAS. The tract at residues 929–957 is disordered; that stretch reads SRPAPAPTAAASPDPSSASGVVEADFTEE.

The protein belongs to the SecA family. In terms of assembly, monomer and homodimer. Part of the essential Sec protein translocation apparatus which comprises SecA, SecYEG and auxiliary proteins SecDF. Other proteins may also be involved.

It is found in the cell inner membrane. The protein resides in the cellular thylakoid membrane. It localises to the cytoplasm. It catalyses the reaction ATP + H2O + cellular proteinSide 1 = ADP + phosphate + cellular proteinSide 2.. Part of the Sec protein translocase complex. Interacts with the SecYEG preprotein conducting channel. Has a central role in coupling the hydrolysis of ATP to the transfer of proteins into and across the cell membrane, serving as an ATP-driven molecular motor driving the stepwise translocation of polypeptide chains across the membrane. Functionally, probably participates in protein translocation into and across both the cytoplasmic and thylakoid membranes in cyanobacterial cells. In Synechococcus sp. (strain JA-2-3B'a(2-13)) (Cyanobacteria bacterium Yellowstone B-Prime), this protein is Protein translocase subunit SecA.